The primary structure comprises 233 residues: tRNA (guanine-N(1)-)-methyltransferase (233 aa).

S-adenosyl-L-methionine contacts are provided by residues Gly113 and 133-138 (VGDYVL).

Belongs to the RNA methyltransferase TrmD family. As to quaternary structure, homodimer.

It is found in the cytoplasm. It catalyses the reaction guanosine(37) in tRNA + S-adenosyl-L-methionine = N(1)-methylguanosine(37) in tRNA + S-adenosyl-L-homocysteine + H(+). Its function is as follows. Specifically methylates guanosine-37 in various tRNAs. The chain is tRNA (guanine-N(1)-)-methyltransferase from Rhizobium etli (strain ATCC 51251 / DSM 11541 / JCM 21823 / NBRC 15573 / CFN 42).